We begin with the raw amino-acid sequence, 578 residues long: MEVNGEIYRVAGPVVTVIGIKPRMYDVVKVGHEGLMGEVIRIKGEQATVQVYEDTSGLKPGEPVMNTGLPLSVELGPGLLESIYDGIQRPLPVLQEKMGNFIQRGVTANGLDRERVWEFKPTVSKGDEVKGGNILGLVQETKNIEHKIMVPPSISGTIKEIKAGSFKVDETICVLTDGTEISMMQKWPVRGPRPVAKKLMPTKPLITGQRILDGMFPIAKGGTAAIPGPFGSGKTVTQQQLAKWSDTDIVVYIGCGERGNEMADVLNEFPELEDPKTGRPLMERTVLIANTSNMPVAAREASVYTGITIAEYYRDMGYDVSLMADSSSRWAEAMREISSRLEEMPGEEGYPAYLSARLSEFYERAGAVNSLAGLDGSITVIGAVSPPGGDFSEPVTQNTLRIVKVFWALDAKLSQRRHFPSINWLTSYSLYTQGLADWYSENVGADWTQLRDDAMDLLQQESELQEIVQLVGSDALPEDQQLTLEVARMVREYFLQQNAFHPVDTYCPFDKQYKLLKSITRYGELATAALESGVPMNKIITIKSKDELAKVKFEENFDAALDVVMKKMDEEFAQIGGN.

228 to 235 (GPFGSGKT) serves as a coordination point for ATP.

The protein belongs to the ATPase alpha/beta chains family. As to quaternary structure, has multiple subunits with at least A(3), B(3), C, D, E, F, H, I and proteolipid K(x).

The protein localises to the cell membrane. The catalysed reaction is ATP + H2O + 4 H(+)(in) = ADP + phosphate + 5 H(+)(out). Functionally, component of the A-type ATP synthase that produces ATP from ADP in the presence of a proton gradient across the membrane. The A chain is the catalytic subunit. The polypeptide is A-type ATP synthase subunit A (Methanococcoides burtonii (strain DSM 6242 / NBRC 107633 / OCM 468 / ACE-M)).